The chain runs to 626 residues: Chaperone protein DnaK (626 aa).

Position 175 is a phosphothreonine; by autocatalysis (Thr-175). Disordered stretches follow at residues 469-488 (DKGTGKEQSMTITGGSGLPK), 498-517 (AEAHEAEDKKRKEDAETRNQ), and 583-626 (AQQG…KDNK). Residues 498 to 516 (AEAHEAEDKKRKEDAETRN) show a composition bias toward basic and acidic residues. The span at 609–626 (SDDDVVDAEVVDDDKDNK) shows a compositional bias: acidic residues.

Belongs to the heat shock protein 70 family.

Acts as a chaperone. This chain is Chaperone protein DnaK, found in Bifidobacterium adolescentis (strain ATCC 15703 / DSM 20083 / NCTC 11814 / E194a).